The sequence spans 397 residues: Phosphopentomutase (397 aa).

Mn(2+) contacts are provided by D12, D289, H294, D330, H331, and H342.

It belongs to the phosphopentomutase family. Mn(2+) serves as cofactor.

It localises to the cytoplasm. It carries out the reaction 2-deoxy-alpha-D-ribose 1-phosphate = 2-deoxy-D-ribose 5-phosphate. The catalysed reaction is alpha-D-ribose 1-phosphate = D-ribose 5-phosphate. The protein operates within carbohydrate degradation; 2-deoxy-D-ribose 1-phosphate degradation; D-glyceraldehyde 3-phosphate and acetaldehyde from 2-deoxy-alpha-D-ribose 1-phosphate: step 1/2. Functionally, isomerase that catalyzes the conversion of deoxy-ribose 1-phosphate (dRib-1-P) and ribose 1-phosphate (Rib-1-P) to deoxy-ribose 5-phosphate (dRib-5-P) and ribose 5-phosphate (Rib-5-P), respectively. This is Phosphopentomutase from Limosilactobacillus reuteri (strain DSM 20016) (Lactobacillus reuteri).